A 163-amino-acid polypeptide reads, in one-letter code: Cytosolic iron-sulfur assembly component 2B (163 aa).

The protein belongs to the MIP18 family. Component of the CIA complex. Component of the MMXD complex, which includes CIAO1, ERCC2, CIAO2B, MMS19 and SLC25A5. Interacts with CIAO1, ERCC2 and MMS19; the interactions are direct. Interacts with KIF4A; the interaction facilitates the transfer of Fe-S clusters to KIF4A to ensure proper localization of KIF4A to the mitotic machinery. Interacts with CCDC117; the interaction is direct.

It localises to the nucleus. It is found in the cytoplasm. The protein resides in the cytoskeleton. The protein localises to the spindle. Its function is as follows. Component of the cytosolic iron-sulfur protein assembly (CIA) complex, a multiprotein complex that mediates the incorporation of iron-sulfur cluster into extramitochondrial Fe/S proteins. As a CIA complex component and in collaboration with CIAO1 and MMS19, binds to and facilitates the assembly of most cytosolic-nuclear Fe/S proteins. As part of the mitotic spindle-associated MMXD complex it plays a role in chromosome segregation, probably by facilitating iron-sulfur cluster assembly into ERCC2/XPD. Together with MMS19, facilitates the transfer of Fe-S clusters to the motor protein KIF4A, which ensures proper localization of KIF4A to mitotic machinery components to promote the progression of mitosis. This is Cytosolic iron-sulfur assembly component 2B from Mus musculus (Mouse).